Here is a 446-residue protein sequence, read N- to C-terminus: 3-phosphoshikimate 1-carboxyvinyltransferase (446 aa).

Positions 21, 22, and 26 each coordinate 3-phosphoshikimate. Residue lysine 21 participates in phosphoenolpyruvate binding. Phosphoenolpyruvate is bound by residues glycine 94 and arginine 122. Residues serine 167, glutamine 169, aspartate 315, and lysine 342 each contribute to the 3-phosphoshikimate site. A phosphoenolpyruvate-binding site is contributed by glutamine 169. The active-site Proton acceptor is aspartate 315. Phosphoenolpyruvate is bound by residues arginine 346 and arginine 388.

The protein belongs to the EPSP synthase family. As to quaternary structure, monomer.

It is found in the cytoplasm. It catalyses the reaction 3-phosphoshikimate + phosphoenolpyruvate = 5-O-(1-carboxyvinyl)-3-phosphoshikimate + phosphate. It participates in metabolic intermediate biosynthesis; chorismate biosynthesis; chorismate from D-erythrose 4-phosphate and phosphoenolpyruvate: step 6/7. Catalyzes the transfer of the enolpyruvyl moiety of phosphoenolpyruvate (PEP) to the 5-hydroxyl of shikimate-3-phosphate (S3P) to produce enolpyruvyl shikimate-3-phosphate and inorganic phosphate. This is 3-phosphoshikimate 1-carboxyvinyltransferase from Alkalilimnicola ehrlichii (strain ATCC BAA-1101 / DSM 17681 / MLHE-1).